Here is a 130-residue protein sequence, read N- to C-terminus: Sulfurtransferase TusD (130 aa).

The Cysteine persulfide intermediate role is filled by Cys-80.

The protein belongs to the DsrE/TusD family. Heterohexamer, formed by a dimer of trimers. The hexameric TusBCD complex contains 2 copies each of TusB, TusC and TusD. The TusBCD complex interacts with TusE.

The protein localises to the cytoplasm. Its function is as follows. Part of a sulfur-relay system required for 2-thiolation of 5-methylaminomethyl-2-thiouridine (mnm(5)s(2)U) at tRNA wobble positions. Accepts sulfur from TusA and transfers it in turn to TusE. The sequence is that of Sulfurtransferase TusD from Proteus mirabilis (strain HI4320).